We begin with the raw amino-acid sequence, 433 residues long: Glutamate-1-semialdehyde 2,1-aminomutase (433 aa).

Position 266 is an N6-(pyridoxal phosphate)lysine (lysine 266).

This sequence belongs to the class-III pyridoxal-phosphate-dependent aminotransferase family. HemL subfamily. As to quaternary structure, homodimer. It depends on pyridoxal 5'-phosphate as a cofactor.

It localises to the cytoplasm. It carries out the reaction (S)-4-amino-5-oxopentanoate = 5-aminolevulinate. The protein operates within porphyrin-containing compound metabolism; protoporphyrin-IX biosynthesis; 5-aminolevulinate from L-glutamyl-tRNA(Glu): step 2/2. This chain is Glutamate-1-semialdehyde 2,1-aminomutase, found in Psychrobacter arcticus (strain DSM 17307 / VKM B-2377 / 273-4).